We begin with the raw amino-acid sequence, 397 residues long: 1-deoxy-D-xylulose 5-phosphate reductoisomerase (397 aa).

Residues threonine 10, glycine 11, serine 12, isoleucine 13, glutamine 38, and asparagine 123 each coordinate NADPH. Residue lysine 124 coordinates 1-deoxy-D-xylulose 5-phosphate. NADPH is bound at residue glutamate 125. Aspartate 149 contributes to the Mn(2+) binding site. Serine 150, glutamate 151, serine 185, and histidine 208 together coordinate 1-deoxy-D-xylulose 5-phosphate. A Mn(2+)-binding site is contributed by glutamate 151. Glycine 214 contacts NADPH. Residues serine 221, asparagine 226, lysine 227, and glutamate 230 each contribute to the 1-deoxy-D-xylulose 5-phosphate site. Residue glutamate 230 participates in Mn(2+) binding.

This sequence belongs to the DXR family. Mg(2+) is required as a cofactor. Requires Mn(2+) as cofactor.

It carries out the reaction 2-C-methyl-D-erythritol 4-phosphate + NADP(+) = 1-deoxy-D-xylulose 5-phosphate + NADPH + H(+). It functions in the pathway isoprenoid biosynthesis; isopentenyl diphosphate biosynthesis via DXP pathway; isopentenyl diphosphate from 1-deoxy-D-xylulose 5-phosphate: step 1/6. Functionally, catalyzes the NADPH-dependent rearrangement and reduction of 1-deoxy-D-xylulose-5-phosphate (DXP) to 2-C-methyl-D-erythritol 4-phosphate (MEP). The chain is 1-deoxy-D-xylulose 5-phosphate reductoisomerase from Idiomarina loihiensis (strain ATCC BAA-735 / DSM 15497 / L2-TR).